The following is a 215-amino-acid chain: Adenylate kinase (215 aa).

Residue 10–15 (GAGKGT) participates in ATP binding. The tract at residues 30–59 (STGDILRDAVSKGTELGKMAKAIMDRGELV) is NMP. Residues Thr-31, Arg-36, 57–59 (ELV), 82–85 (GYPR), and Gln-89 each bind AMP. Residues 123–160 (NRRVCPNCGKVYNLITLQPKEDEKCDVCGTKLIQRDDD) are LID. An ATP-binding site is contributed by Arg-124. Zn(2+) is bound by residues Cys-127 and Cys-130. 133–134 (VY) contributes to the ATP binding site. 2 residues coordinate Zn(2+): Cys-147 and Cys-150. Residues Arg-157 and Arg-168 each coordinate AMP. Gln-196 is an ATP binding site.

The protein belongs to the adenylate kinase family. As to quaternary structure, monomer.

Its subcellular location is the cytoplasm. The enzyme catalyses AMP + ATP = 2 ADP. The protein operates within purine metabolism; AMP biosynthesis via salvage pathway; AMP from ADP: step 1/1. In terms of biological role, catalyzes the reversible transfer of the terminal phosphate group between ATP and AMP. Plays an important role in cellular energy homeostasis and in adenine nucleotide metabolism. The protein is Adenylate kinase of Petrotoga mobilis (strain DSM 10674 / SJ95).